We begin with the raw amino-acid sequence, 202 residues long: MAASNPRQAEISRKTNETDISVTVDLDGEGRSDISTGVGFFDHMLDQLSRHSLIDMKVSALGDLHIDDHHTVEDCGIAIGQAIAKALGDRRGITRYASLDLAMDEALTRAAVDVSGRPFLVWQVTFPSPKIGSFDTELVREFFQALAQNAGITLHVTNLYGANAHHIAETCFKAVARVLRAALSPDPRQLNAIPSTKGTLNG.

This sequence belongs to the imidazoleglycerol-phosphate dehydratase family.

The protein localises to the cytoplasm. It carries out the reaction D-erythro-1-(imidazol-4-yl)glycerol 3-phosphate = 3-(imidazol-4-yl)-2-oxopropyl phosphate + H2O. The protein operates within amino-acid biosynthesis; L-histidine biosynthesis; L-histidine from 5-phospho-alpha-D-ribose 1-diphosphate: step 6/9. The protein is Imidazoleglycerol-phosphate dehydratase of Chelativorans sp. (strain BNC1).